A 324-amino-acid polypeptide reads, in one-letter code: NADH-ubiquinone oxidoreductase chain 1 (324 aa).

Transmembrane regions (helical) follow at residues 9–29 (LINP…LTLI), 75–95 (FLFL…WAPM), 106–126 (LGIL…LGSG), 146–166 (ISYE…SGGY), 177–197 (SIWL…STLA), 228–248 (LFFL…AVLF), 259–279 (ELTT…FLWV), and 299–319 (FLPL…ALAG).

Belongs to the complex I subunit 1 family.

The protein resides in the mitochondrion inner membrane. It catalyses the reaction a ubiquinone + NADH + 5 H(+)(in) = a ubiquinol + NAD(+) + 4 H(+)(out). Functionally, core subunit of the mitochondrial membrane respiratory chain NADH dehydrogenase (Complex I) that is believed to belong to the minimal assembly required for catalysis. Complex I functions in the transfer of electrons from NADH to the respiratory chain. The immediate electron acceptor for the enzyme is believed to be ubiquinone. This is NADH-ubiquinone oxidoreductase chain 1 (MT-ND1) from Carassius auratus (Goldfish).